We begin with the raw amino-acid sequence, 347 residues long: Protein PET130 (347 aa).

It is found in the mitochondrion matrix. In Saccharomyces cerevisiae (strain ATCC 204508 / S288c) (Baker's yeast), this protein is Protein PET130 (PET130).